Here is a 443-residue protein sequence, read N- to C-terminus: MQNRPRVFDSAMNLSPNMHFLSLMPGLLLLSLQVHTSPTPLKKTIRSVRIERIRQPNYVPDGPGALKKAYAKFGIIPSGISFDSFEDFTPFSSDNVRNTVSKAMQANETGIVTNTPTNNDVEYLSPVTIGGQKFVMNLDTGSSDTWVFNTQLSEDAKRGHSIFDPAKSKAFSDLEDATFNITYGDASFAFGRVGIDTVDIGGATVQKQAVGLPTDVSGSFILDQASDGLIGLGFDELNTVEPQQQKSFFTNLAANLDEPVLAAQLKKGAPGSYEFGSIDETKFKGDLVTIPVNNSRGFWEVKSTMFKVGKDEQLHRITKGVGSAIADTGTTLMLVNEEIVNSYYDQVDNARSVYAAGGFIFPCNATLPDLYVSLGDTHLARIPGDLMNFSKVGLSTETGEELCFGGVQSNSGSGLQVFGDVLFKAIFVVFDLRGPSLHVAGHA.

The signal sequence occupies residues 1 to 36; it reads MQNRPRVFDSAMNLSPNMHFLSLMPGLLLLSLQVHT. Residues 37–107 constitute a propeptide, activation peptide; that stretch reads SPTPLKKTIR…NTVSKAMQAN (71 aa). One can recognise a Peptidase A1 domain in the interval 123-440; sequence YLSPVTIGGQ…DLRGPSLHVA (318 aa). Residue Asp-139 is part of the active site. N-linked (GlcNAc...) asparagine glycosylation is found at Asn-180 and Asn-293. Asp-327 is a catalytic residue. Cys-363 and Cys-403 are disulfide-bonded. 2 N-linked (GlcNAc...) asparagine glycosylation sites follow: Asn-364 and Asn-388.

This sequence belongs to the peptidase A1 family. Monomer.

It is found in the secreted. In terms of biological role, secreted aspartic endopeptidase that allows assimilation of proteinaceous substrates. The scissile peptide bond is attacked by a nucleophilic water molecule activated by two aspartic residues in the active site. Shows a broad primary substrate specificity. Favors hydrophobic residues at the P1 and P1' positions. This Coccidioides posadasii (strain C735) (Valley fever fungus) protein is Aspartic protease PEP3.